Here is a 65-residue protein sequence, read N- to C-terminus: DNA-directed RNA polymerase subunit Rpo10 (65 aa).

Zn(2+)-binding residues include Cys-7, Cys-10, Cys-44, and Cys-45.

The protein belongs to the archaeal Rpo10/eukaryotic RPB10 RNA polymerase subunit family. In terms of assembly, part of the RNA polymerase complex. Requires Zn(2+) as cofactor.

The protein resides in the cytoplasm. It catalyses the reaction RNA(n) + a ribonucleoside 5'-triphosphate = RNA(n+1) + diphosphate. DNA-dependent RNA polymerase (RNAP) catalyzes the transcription of DNA into RNA using the four ribonucleoside triphosphates as substrates. The sequence is that of DNA-directed RNA polymerase subunit Rpo10 from Thermococcus onnurineus (strain NA1).